Reading from the N-terminus, the 362-residue chain is Ribosome-binding ATPase YchF (362 aa).

An OBG-type G domain is found at 3 to 255 (FKCGIIGLPN…MSDEEKKSFM (253 aa)). Residue 12–17 (NVGKST) coordinates ATP. Mg(2+)-binding residues include Ser-16 and Thr-36. The region spanning 277–360 (NLITFFTVGD…QDGDIIHFLF (84 aa)) is the TGS domain.

Belongs to the TRAFAC class OBG-HflX-like GTPase superfamily. OBG GTPase family. YchF/OLA1 subfamily. The cofactor is Mg(2+).

ATPase that binds to both the 70S ribosome and the 50S ribosomal subunit in a nucleotide-independent manner. This is Ribosome-binding ATPase YchF from Buchnera aphidicola subsp. Acyrthosiphon pisum (strain APS) (Acyrthosiphon pisum symbiotic bacterium).